Here is a 627-residue protein sequence, read N- to C-terminus: Xaa-Pro aminopeptidase 1 (627 aa).

A peptide contacts are provided by Arg88 and His405. Residues Asp424, Asp435, and His498 each contribute to the Mn(2+) site. 3 residues coordinate a peptide: His498, His507, and Glu533. Residues Glu533 and Glu547 each coordinate Mn(2+).

Belongs to the peptidase M24B family. Homodimer. It depends on Mn(2+) as a cofactor.

Its subcellular location is the cytoplasm. It is found in the cytosol. The catalysed reaction is Release of any N-terminal amino acid, including proline, that is linked to proline, even from a dipeptide or tripeptide.. Metalloaminopeptidase that catalyzes the removal of a penultimate prolyl residue from the N-termini of peptides, such as Arg-Pro-Pro. The protein is Xaa-Pro aminopeptidase 1 (xpnpep1) of Dictyostelium discoideum (Social amoeba).